We begin with the raw amino-acid sequence, 269 residues long: Small ribosomal subunit protein uS2 (269 aa).

Residues 235-269 (FDAKNPLKPQNYNTLNKRPYQDSPRKPSYQNQNQR) form a disordered region.

Belongs to the universal ribosomal protein uS2 family.

This Aster yellows witches'-broom phytoplasma (strain AYWB) protein is Small ribosomal subunit protein uS2.